We begin with the raw amino-acid sequence, 93 residues long: Neutrophil cationic peptide 1 type B (93 aa).

An N-terminal signal peptide occupies residues 1–19; it reads MRTVPLFAACLLLTLMAQA. A propeptide spanning residues 20–62 is cleaved from the precursor; sequence EPLPRAADHSDTKMKGDREDHVAVISFWEEESTSLQDAGAGAG. 3 disulfides stabilise this stretch: C65/C93, C67/C82, and C72/C92.

The protein belongs to the alpha-defensin family. Bone marrow.

It localises to the secreted. Its function is as follows. Has antibiotic, anti-fungi and antiviral activity. The protein is Neutrophil cationic peptide 1 type B of Cavia porcellus (Guinea pig).